Consider the following 241-residue polypeptide: Thymidylate kinase (241 aa).

17–24 (GGEGAGKT) is an ATP binding site.

Belongs to the thymidylate kinase family.

The catalysed reaction is dTMP + ATP = dTDP + ADP. Functionally, phosphorylation of dTMP to form dTDP in both de novo and salvage pathways of dTTP synthesis. In Thermosynechococcus vestitus (strain NIES-2133 / IAM M-273 / BP-1), this protein is Thymidylate kinase.